A 285-amino-acid polypeptide reads, in one-letter code: Bifunctional protein FolD (285 aa).

NADP(+) is bound by residues 166 to 168 (GRS), S191, and T232.

The protein belongs to the tetrahydrofolate dehydrogenase/cyclohydrolase family. Homodimer.

It carries out the reaction (6R)-5,10-methylene-5,6,7,8-tetrahydrofolate + NADP(+) = (6R)-5,10-methenyltetrahydrofolate + NADPH. The enzyme catalyses (6R)-5,10-methenyltetrahydrofolate + H2O = (6R)-10-formyltetrahydrofolate + H(+). Its pathway is one-carbon metabolism; tetrahydrofolate interconversion. Its function is as follows. Catalyzes the oxidation of 5,10-methylenetetrahydrofolate to 5,10-methenyltetrahydrofolate and then the hydrolysis of 5,10-methenyltetrahydrofolate to 10-formyltetrahydrofolate. The polypeptide is Bifunctional protein FolD (Chloroflexus aggregans (strain MD-66 / DSM 9485)).